A 235-amino-acid chain; its full sequence is Regulator of G-protein signaling 18 (235 aa).

Serine 49 carries the post-translational modification Phosphoserine. The region spanning 86–202 (SFDKLLSHRD…LKSDIYLDLM (117 aa)) is the RGS domain. Phosphoserine is present on residues serine 216 and serine 218.

Expressed in peripheral leukocytes, bone marrow, platelet, spleen and fetal liver.

Its subcellular location is the cytoplasm. Inhibits signal transduction by increasing the GTPase activity of G protein alpha subunits thereby driving them into their inactive GDP-bound form. Binds to G(i) alpha-1, G(i) alpha-2, G(i) alpha-3 and G(q) alpha. The protein is Regulator of G-protein signaling 18 (RGS18) of Homo sapiens (Human).